Reading from the N-terminus, the 261-residue chain is Carnitinyl-CoA dehydratase (261 aa).

Glutamate 111 acts as the Nucleophile in catalysis. Residue glutamate 131 is the Proton acceptor of the active site.

The protein belongs to the enoyl-CoA hydratase/isomerase family.

The catalysed reaction is (R)-carnitinyl-CoA = crotonobetainyl-CoA + H2O. The protein operates within amine and polyamine metabolism; carnitine metabolism. In terms of biological role, catalyzes the reversible dehydration of L-carnitinyl-CoA to crotonobetainyl-CoA. The chain is Carnitinyl-CoA dehydratase from Salmonella dublin (strain CT_02021853).